The chain runs to 448 residues: RuvB-like 2 (448 aa).

73-80 (GEPGAGKT) contacts ATP.

The protein belongs to the RuvB family. In terms of assembly, forms homohexameric rings. May form a dodecamer with ruvb-1 made of two stacked hexameric rings. Expressed in gonadal cells.

The protein localises to the cytoplasm. The protein resides in the nucleus. The enzyme catalyses ATP + H2O = ADP + phosphate + H(+). Its function is as follows. Possesses single-stranded DNA-stimulated ATPase and ATP-dependent DNA helicase (5' to 3') activity suggesting a role in nuclear processes such as recombination and transcription. May participate in several chromatin remodeling complexes that mediate the ATP-dependent exchange of histones and remodel chromatin by shifting nucleosomes. Involvement in these complexes is likely required for transcriptional activation of selected genes and DNA repair in response to DNA damage. Has a role in gonadal development. Involved in the endoplasmic reticulum (ER)-associated degradation (ERAD) pathway where it negatively regulates expression of ER stress response genes. Specifically, negatively controls the expression of ER homeostasis regulator ckb-2 in a cdc-48.1/2-dependent manner. The sequence is that of RuvB-like 2 from Caenorhabditis elegans.